Here is a 179-residue protein sequence, read N- to C-terminus: Probable DNA-directed RNA polymerase subunit delta (179 aa).

Residues 14 to 81 (MSLVELAYEI…GDQRWGLRSW (68 aa)) form the HTH HARE-type domain. The tract at residues 108 to 179 (VVEEDFDEIE…DDLDDNEEEK (72 aa)) is disordered. The segment covering 109–179 (VEEDFDEIEE…DDLDDNEEEK (71 aa)) has biased composition (acidic residues).

This sequence belongs to the RpoE family. As to quaternary structure, RNAP is composed of a core of 2 alpha, a beta and a beta' subunits. The core is associated with a delta subunit and one of several sigma factors.

In terms of biological role, participates in both the initiation and recycling phases of transcription. In the presence of the delta subunit, RNAP displays an increased specificity of transcription, a decreased affinity for nucleic acids, and an increased efficiency of RNA synthesis because of enhanced recycling. The protein is Probable DNA-directed RNA polymerase subunit delta of Bacillus pumilus (strain SAFR-032).